Here is a 134-residue protein sequence, read N- to C-terminus: Cytochrome c-550 (134 aa).

The residue at position 1 (Gln-1) is a Pyrrolidone carboxylic acid. Positions 15, 18, 19, and 100 each coordinate heme c.

In terms of processing, binds 1 heme c group covalently per subunit.

Electron donor for nitrous-oxide reductase. The chain is Cytochrome c-550 from Paracoccus pantotrophus (Thiosphaera pantotropha).